Reading from the N-terminus, the 336-residue chain is Prenytransferase ascA (336 aa).

Positions 1-26 (MAAKSRSPKRGTSEKTPLVEKEAPYQ) are disordered. Over residues 11 to 23 (GTSEKTPLVEKEA) the composition is skewed to basic and acidic residues. 8 helical membrane passes run 52 to 72 (PHGNYMIYFPHIIGLMYASAI), 74 to 94 (PTELSVLGHRAAIFAIWTFLM), 131 to 151 (GHVFTLILTLLGFAAIQSLPI), 179 to 199 (VILGSTLASTIALSAYSVGLP), 206 to 226 (FVPTLCLSATIMLLVVFYDVV), 251 to 271 (LEGLFAFITLSIAGSLTTLGY), 272 to 292 (LVGMGHWFYLFSVGGLTFGLV), and 314 to 334 (FAILNLLTGFIMEYATKDYVV).

Belongs to the UbiA prenyltransferase family. Mg(2+) serves as cofactor.

It localises to the membrane. It catalyses the reaction orsellinate + (2E,6E)-farnesyl diphosphate = ilicicolinate B + diphosphate. It functions in the pathway secondary metabolite biosynthesis; terpenoid biosynthesis. Its function is as follows. Prenytransferase; part of the asc-1 gene cluster that mediates the biosynthesis of both ascochlorin and ascofuranone, a strong inhibitor of cyanide-insensitive alternative oxidases and a promising drug candidate against African trypanosomiasis. The first step in the pathway is performed by the non-reducing polyketide synthase ascC that produces orsellinic acid by condensing acetyl-CoA with 3 malonyl-CoA units. Orsellinic acid is then prenylated by the prenyltransferase ascA to yield ilicicolinic acid B. Ilicicolinic acid B is further reduced to ilicicolin B by the reductase ascB. The halogenase ascD then chlorinates ilicicolin B to produce ilicicolin A which is converted to ilicicolin A epoxide by the cytochrome P450 monooxygenase ascE that catalyzes stereoselective epoxidation of the terminal double bond of the prenyl group. Ilicicolin A epoxide is the last common precursor for the biosynthesis of ascofuranone and ascochlorin. The terpene cyclase ascF produces a monocyclic terpene, and the cyclization reaction is proposed to be initiated by protonation of the terminal epoxide of ilicicolin A epoxide to generate a monocyclic tertiarycation, which is followed by a series of hydride and methyl shifts with abstraction of proton, leading to the formation of the (14S,15R,19R)-trimethylcyclohexanone ring structure of ilicicolin C, which is finally reduced to ascochlorin by the dehydrogenase ascG. On the other hand, ilicicolin A epoxide is hydroxylated by the cytochrome P450 monooxygenase ascH, and the resultant product is cyclized by the terpene cyclase ascI to ascofuranol via protonation-initiated epoxide ring opening, which facilitates the 6-endo-tet cyclization to form the tetrahy-drofuran ring. Finally, ascofuranol is oxidized into ascofuranone by ascJ. The sequence is that of Prenytransferase ascA from Acremonium egyptiacum (Oospora egyptiaca).